A 956-amino-acid polypeptide reads, in one-letter code: Lon protease homolog, mitochondrial 1 (956 aa).

Disordered stretches follow at residues 37–57 and 83–123; these read NNNN…NNNN and KKKG…GNEK. Basic and acidic residues predominate over residues 91–123; it reads NNDDNDNEKNEKNEKKVKNEKKEKNEKNDGNEK. The 199-residue stretch at 159–357 folds into the Lon N-terminal domain; the sequence is VVIYPSNSVN…MLYHMILNEQ (199 aa). Residue 511 to 518 participates in ATP binding; sequence GPPGTGKT. Positions 747–945 constitute a Lon proteolytic domain; the sequence is VTPIGVVNGL…KDVFEVAFPN (199 aa). Residues 777–795 show a composition bias toward low complexity; that stretch reads KPLSSLPPSQQQQNQLEPS. Residues 777 to 800 form a disordered region; sequence KPLSSLPPSQQQQNQLEPSIKTTG. Residues serine 851 and lysine 894 contribute to the active site.

The protein belongs to the peptidase S16 family. In terms of assembly, homohexamer or homoheptamer. Organized in a ring with a central cavity.

It localises to the mitochondrion matrix. The enzyme catalyses Hydrolysis of proteins in presence of ATP.. Functionally, ATP-dependent serine protease that mediates the selective degradation of misfolded, unassembled or oxidatively damaged polypeptides as well as certain short-lived regulatory proteins in the mitochondrial matrix. May also have a chaperone function in the assembly of inner membrane protein complexes. Participates in the regulation of mitochondrial gene expression and in the maintenance of the integrity of the mitochondrial genome. Binds to mitochondrial DNA in a site-specific manner. The polypeptide is Lon protease homolog, mitochondrial 1 (Dictyostelium discoideum (Social amoeba)).